Here is a 234-residue protein sequence, read N- to C-terminus: uncharacterized protein (234 aa).

The ABC transporter domain occupies 5 to 234; the sequence is MELVDVWKIY…ERRGVVYGDT (230 aa). 41 to 48 is a binding site for ATP; sequence GPSGSGKS.

This sequence belongs to the ABC transporter superfamily.

This is an uncharacterized protein from Thermotoga maritima (strain ATCC 43589 / DSM 3109 / JCM 10099 / NBRC 100826 / MSB8).